Consider the following 99-residue polypeptide: MKGQSMILKDLAAELEEVVSPINLDCEEEIETEEVDCPAPFAVEAVCHVCEQVLRLAVVASPDGILQLQQLLLTDSLSFLCTSCSREAFCNRRPQRNGS.

The segment at 1–37 is E7 terminal domain; the sequence is MKGQSMILKDLAAELEEVVSPINLDCEEEIETEEVDC. An LXCXE motif; interaction with host RB1 and TMEM173/STING motif is present at residues 24-28; sequence LDCEE. The segment at 47–84 is a zinc-finger region; sequence CHVCEQVLRLAVVASPDGILQLQQLLLTDSLSFLCTSC. Residues 65–73 carry the Nuclear export signal motif; it reads ILQLQQLLL.

It belongs to the papillomaviridae E7 protein family. As to quaternary structure, homodimer. Homooligomer. Interacts with host RB1; this interaction induces dissociation of RB1-E2F1 complex thereby disrupting RB1 activity. Interacts with host EP300; this interaction represses EP300 transcriptional activity. Interacts with protein E2; this interaction inhibits E7 oncogenic activity. Interacts with host TMEM173/STING; this interaction impairs the ability of TMEM173/STING to sense cytosolic DNA and promote the production of type I interferon (IFN-alpha and IFN-beta). Post-translationally, highly phosphorylated.

The protein resides in the host cytoplasm. It is found in the host nucleus. Functionally, plays a role in viral genome replication by driving entry of quiescent cells into the cell cycle. Stimulation of progression from G1 to S phase allows the virus to efficiently use the cellular DNA replicating machinery to achieve viral genome replication. E7 protein has both transforming and trans-activating activities. Induces the disassembly of the E2F1 transcription factor from RB1, with subsequent transcriptional activation of E2F1-regulated S-phase genes. Interferes with host histone deacetylation mediated by HDAC1 and HDAC2, leading to transcription activation. Also plays a role in the inhibition of both antiviral and antiproliferative functions of host interferon alpha. Interaction with host TMEM173/STING impairs the ability of TMEM173/STING to sense cytosolic DNA and promote the production of type I interferon (IFN-alpha and IFN-beta). In Bos taurus papillomavirus 6 (Bovine papillomavirus 6), this protein is Protein E7.